We begin with the raw amino-acid sequence, 451 residues long: Speckle-type POZ protein homolog (451 aa).

The tract at residues 51–75 is disordered; that stretch reads EVVSSGSGNSAHGRSISPSPSSASH. Residues 60-75 are compositionally biased toward low complexity; it reads SAHGRSISPSPSSASH. Residues 95 to 225 enclose the MATH domain; sequence KFNYMWTINN…GDRLSIFCEV (131 aa). Positions 265–338 constitute a BTB domain; sequence SDFTLVCKSD…MYTGQTKYIE (74 aa).

It belongs to the Tdpoz family.

It localises to the nucleus. Its subcellular location is the nucleus speckle. The protein operates within protein modification; protein ubiquitination. Functionally, mediates ubiquitination and proteasomal degradation of target proteins, most likely in complex with cul-3. May promote the degradation of bromodomain-containing proteins such as bet-1. In Caenorhabditis elegans, this protein is Speckle-type POZ protein homolog.